We begin with the raw amino-acid sequence, 264 residues long: Undecaprenyl-diphosphatase (264 aa).

A run of 7 helical transmembrane segments spans residues leucine 34–isoleucine 54, leucine 75–isoleucine 95, tyrosine 104–isoleucine 124, leucine 137–valine 157, tyrosine 180–serine 200, valine 207–glycine 227, and isoleucine 243–leucine 263.

Belongs to the UppP family.

The protein localises to the cell membrane. It catalyses the reaction di-trans,octa-cis-undecaprenyl diphosphate + H2O = di-trans,octa-cis-undecaprenyl phosphate + phosphate + H(+). Catalyzes the dephosphorylation of undecaprenyl diphosphate (UPP). The sequence is that of Undecaprenyl-diphosphatase from Sulfurisphaera tokodaii (strain DSM 16993 / JCM 10545 / NBRC 100140 / 7) (Sulfolobus tokodaii).